We begin with the raw amino-acid sequence, 211 residues long: Redox-sensing transcriptional repressor Rex (211 aa).

Positions 17-56 (LYYRFVSSLKSKGIDRVNSKAISDALQIDSATIRRDFSYF) form a DNA-binding region, H-T-H motif. 91-96 (GVGNLG) is an NAD(+) binding site.

Belongs to the transcriptional regulatory Rex family. Homodimer.

Its subcellular location is the cytoplasm. In terms of biological role, modulates transcription in response to changes in cellular NADH/NAD(+) redox state. The sequence is that of Redox-sensing transcriptional repressor Rex from Staphylococcus aureus (strain Mu3 / ATCC 700698).